The primary structure comprises 190 residues: Small ribosomal subunit protein eS7B (190 aa).

Ser2 carries the post-translational modification N-acetylserine. Residues Ser10 and Ser31 each carry the phosphoserine modification. Glycyl lysine isopeptide (Lys-Gly) (interchain with G-Cter in ubiquitin) cross-links involve residues Lys83 and Lys84.

It belongs to the eukaryotic ribosomal protein eS7 family. In terms of assembly, component of the small ribosomal subunit (SSU). Mature yeast ribosomes consist of a small (40S) and a large (60S) subunit. The 40S small subunit contains 1 molecule of ribosomal RNA (18S rRNA) and 33 different proteins (encoded by 57 genes). The large 60S subunit contains 3 rRNA molecules (25S, 5.8S and 5S rRNA) and 46 different proteins (encoded by 81 genes). Interacts with snoRNA U3. uS11 interacts with MPP10. Component of the ribosomal small subunit (SSU) processome composed of at least 40 protein subunits and snoRNA U3. In terms of processing, N-terminally acetylated by acetyltransferase NatA. Ubiquitinated at Lys-83 and Lys-84 in response to stalled ribosomes, leading to activation of the No-Go Decay (NGD) pathway: first monoubiquitinated by MOT2/NOT4, followed by formation by HEL2 of 'Lys-63'-linked polyubiquitin chains on monoubiquitin.

The protein resides in the cytoplasm. It is found in the nucleus. The protein localises to the nucleolus. Component of the ribosome, a large ribonucleoprotein complex responsible for the synthesis of proteins in the cell. The small ribosomal subunit (SSU) binds messenger RNAs (mRNAs) and translates the encoded message by selecting cognate aminoacyl-transfer RNA (tRNA) molecules. The large subunit (LSU) contains the ribosomal catalytic site termed the peptidyl transferase center (PTC), which catalyzes the formation of peptide bonds, thereby polymerizing the amino acids delivered by tRNAs into a polypeptide chain. The nascent polypeptides leave the ribosome through a tunnel in the LSU and interact with protein factors that function in enzymatic processing, targeting, and the membrane insertion of nascent chains at the exit of the ribosomal tunnel. eS7 is involved in nucleolar processing of pre-18S ribosomal RNA and ribosome assembly. The polypeptide is Small ribosomal subunit protein eS7B (Saccharomyces cerevisiae (strain ATCC 204508 / S288c) (Baker's yeast)).